The primary structure comprises 576 residues: Probable proline--tRNA ligase, mitochondrial (576 aa).

It belongs to the class-II aminoacyl-tRNA synthetase family.

It is found in the mitochondrion. The enzyme catalyses tRNA(Pro) + L-proline + ATP = L-prolyl-tRNA(Pro) + AMP + diphosphate. The protein is Probable proline--tRNA ligase, mitochondrial (AIM10) of Saccharomyces cerevisiae (strain ATCC 204508 / S288c) (Baker's yeast).